The following is a 146-amino-acid chain: Large ribosomal subunit protein uL16c (146 aa).

This sequence belongs to the universal ribosomal protein uL16 family. As to quaternary structure, part of the 50S ribosomal subunit.

The protein resides in the plastid. The protein localises to the chloroplast. In Angiopteris evecta (Mule's foot fern), this protein is Large ribosomal subunit protein uL16c.